A 432-amino-acid polypeptide reads, in one-letter code: Glutamate-1-semialdehyde 2,1-aminomutase (432 aa).

K265 is subject to N6-(pyridoxal phosphate)lysine.

It belongs to the class-III pyridoxal-phosphate-dependent aminotransferase family. HemL subfamily. In terms of assembly, homodimer. It depends on pyridoxal 5'-phosphate as a cofactor.

Its subcellular location is the cytoplasm. It carries out the reaction (S)-4-amino-5-oxopentanoate = 5-aminolevulinate. Its pathway is porphyrin-containing compound metabolism; protoporphyrin-IX biosynthesis; 5-aminolevulinate from L-glutamyl-tRNA(Glu): step 2/2. This is Glutamate-1-semialdehyde 2,1-aminomutase from Histophilus somni (strain 129Pt) (Haemophilus somnus).